Here is a 60-residue protein sequence, read N- to C-terminus: LKCHQLVPPFWKTCPEGKNLCYKMYMVSSSTVPVKRGCIDVCPKNSALVKYVCCNTDKCN.

Disulfide bonds link Cys3/Cys21, Cys14/Cys38, Cys42/Cys53, and Cys54/Cys59.

It belongs to the three-finger toxin family. Short-chain subfamily. Type IA cytotoxin sub-subfamily. In terms of assembly, monomer in solution; Homodimer and oligomer in the presence of negatively charged lipids forming a pore with a size ranging between 20 and 30 Angstroms. In terms of tissue distribution, expressed by the venom gland.

The protein localises to the secreted. Its subcellular location is the target cell membrane. Shows cytolytic activity on many different cells by forming pore in lipid membranes. In vivo, increases heart rate or kills the animal by cardiac arrest. In addition, it binds to heparin with high affinity, interacts with Kv channel-interacting protein 1 (KCNIP1) in a calcium-independent manner, and binds to integrin alpha-V/beta-3 (ITGAV/ITGB3) with moderate affinity. This Naja haje haje (Egyptian cobra) protein is Cytotoxin 5.